The primary structure comprises 264 residues: tRNA (guanine-N(1)-)-methyltransferase (264 aa).

149-154 (IGDYVL) contacts S-adenosyl-L-methionine.

The protein belongs to the RNA methyltransferase TrmD family. As to quaternary structure, homodimer.

The protein resides in the cytoplasm. The enzyme catalyses guanosine(37) in tRNA + S-adenosyl-L-methionine = N(1)-methylguanosine(37) in tRNA + S-adenosyl-L-homocysteine + H(+). In terms of biological role, specifically methylates guanosine-37 in various tRNAs. In Methylobacillus flagellatus (strain ATCC 51484 / DSM 6875 / VKM B-1610 / KT), this protein is tRNA (guanine-N(1)-)-methyltransferase.